The following is a 156-amino-acid chain: Small ribosomal subunit protein uS7 (156 aa).

This sequence belongs to the universal ribosomal protein uS7 family. Part of the 30S ribosomal subunit. Contacts proteins S9 and S11.

Functionally, one of the primary rRNA binding proteins, it binds directly to 16S rRNA where it nucleates assembly of the head domain of the 30S subunit. Is located at the subunit interface close to the decoding center, probably blocks exit of the E-site tRNA. This Bartonella quintana (strain Toulouse) (Rochalimaea quintana) protein is Small ribosomal subunit protein uS7.